A 591-amino-acid chain; its full sequence is Aspartate--tRNA(Asp/Asn) ligase (591 aa).

Glu174 serves as a coordination point for L-aspartate. The segment at 198-201 is aspartate; it reads QLFK. Arg220 serves as a coordination point for L-aspartate. ATP is bound by residues 220–222 and Gln229; that span reads RDE. Residue His450 participates in L-aspartate binding. Glu483 contacts ATP. Arg490 contacts L-aspartate. 535–538 provides a ligand contact to ATP; that stretch reads GLDR.

This sequence belongs to the class-II aminoacyl-tRNA synthetase family. Type 1 subfamily. As to quaternary structure, homodimer.

It localises to the cytoplasm. The catalysed reaction is tRNA(Asx) + L-aspartate + ATP = L-aspartyl-tRNA(Asx) + AMP + diphosphate. In terms of biological role, aspartyl-tRNA synthetase with relaxed tRNA specificity since it is able to aspartylate not only its cognate tRNA(Asp) but also tRNA(Asn). Reaction proceeds in two steps: L-aspartate is first activated by ATP to form Asp-AMP and then transferred to the acceptor end of tRNA(Asp/Asn). The chain is Aspartate--tRNA(Asp/Asn) ligase from Pseudomonas fluorescens (strain ATCC BAA-477 / NRRL B-23932 / Pf-5).